The chain runs to 138 residues: Small ribosomal subunit protein uS11c (138 aa).

Belongs to the universal ribosomal protein uS11 family. Part of the 30S ribosomal subunit.

It is found in the plastid. The protein resides in the chloroplast. The sequence is that of Small ribosomal subunit protein uS11c from Phalaenopsis aphrodite subsp. formosana (Moth orchid).